A 361-amino-acid chain; its full sequence is Chorismate synthase (361 aa).

NADP(+)-binding residues include Arg-48 and Arg-54. FMN contacts are provided by residues 125–127 (RSS), 238–239 (NA), Gly-278, 293–297 (KPTSS), and Arg-319.

This sequence belongs to the chorismate synthase family. Homotetramer. The cofactor is FMNH2.

It carries out the reaction 5-O-(1-carboxyvinyl)-3-phosphoshikimate = chorismate + phosphate. It participates in metabolic intermediate biosynthesis; chorismate biosynthesis; chorismate from D-erythrose 4-phosphate and phosphoenolpyruvate: step 7/7. Catalyzes the anti-1,4-elimination of the C-3 phosphate and the C-6 proR hydrogen from 5-enolpyruvylshikimate-3-phosphate (EPSP) to yield chorismate, which is the branch point compound that serves as the starting substrate for the three terminal pathways of aromatic amino acid biosynthesis. This reaction introduces a second double bond into the aromatic ring system. The sequence is that of Chorismate synthase from Escherichia coli O139:H28 (strain E24377A / ETEC).